The following is a 360-amino-acid chain: Phenylalanine--tRNA ligase alpha subunit (360 aa).

A Mg(2+)-binding site is contributed by glutamate 260.

It belongs to the class-II aminoacyl-tRNA synthetase family. Phe-tRNA synthetase alpha subunit type 1 subfamily. In terms of assembly, tetramer of two alpha and two beta subunits. Mg(2+) serves as cofactor.

Its subcellular location is the cytoplasm. It catalyses the reaction tRNA(Phe) + L-phenylalanine + ATP = L-phenylalanyl-tRNA(Phe) + AMP + diphosphate + H(+). This Bradyrhizobium sp. (strain BTAi1 / ATCC BAA-1182) protein is Phenylalanine--tRNA ligase alpha subunit.